A 130-amino-acid polypeptide reads, in one-letter code: Small ribosomal subunit protein uS8 (130 aa).

This sequence belongs to the universal ribosomal protein uS8 family. Part of the 30S ribosomal subunit.

One of the primary rRNA binding proteins, it binds directly to 16S rRNA central domain where it helps coordinate assembly of the platform of the 30S subunit. This is Small ribosomal subunit protein uS8 from Pyrococcus horikoshii (strain ATCC 700860 / DSM 12428 / JCM 9974 / NBRC 100139 / OT-3).